The following is a 339-amino-acid chain: Ribosomal RNA large subunit methyltransferase M (339 aa).

Residues Ser-176, 206–209 (APGG), Asp-225, Asp-245, and Asp-261 contribute to the S-adenosyl-L-methionine site. Catalysis depends on Lys-290, which acts as the Proton acceptor.

This sequence belongs to the class I-like SAM-binding methyltransferase superfamily. RNA methyltransferase RlmE family. RlmM subfamily. As to quaternary structure, monomer.

Its subcellular location is the cytoplasm. It catalyses the reaction cytidine(2498) in 23S rRNA + S-adenosyl-L-methionine = 2'-O-methylcytidine(2498) in 23S rRNA + S-adenosyl-L-homocysteine + H(+). Functionally, catalyzes the 2'-O-methylation at nucleotide C2498 in 23S rRNA. The sequence is that of Ribosomal RNA large subunit methyltransferase M from Halorhodospira halophila (strain DSM 244 / SL1) (Ectothiorhodospira halophila (strain DSM 244 / SL1)).